Consider the following 688-residue polypeptide: Transcriptional regulatory protein GAT1 (688 aa).

Disordered stretches follow at residues 83–125 (NHNS…SPMI), 259–278 (TSAS…NNSS), 343–438 (FTGI…GVSC), 482–565 (IKKR…NLDK), and 639–678 (LMTM…TANN). Residues 259–271 (TSASITSPTSTFS) show a composition bias toward low complexity. The segment covering 359–368 (FDNKPKDDHF) has biased composition (basic and acidic residues). The segment covering 369–379 (NTSLSVSQQQP) has biased composition (polar residues). A compositionally biased stretch (basic residues) spans 382–397 (KKSKRKSTITKSKKKA). Residues 402 to 428 (TTITSTGSTITTKSTNSNSTGKGTATG) are compositionally biased toward low complexity. The GATA-type zinc-finger motif lies at 438-462 (CTNCGTKTTPLWRRNPQGQPLCNAC). 5 stretches are compositionally biased toward low complexity: residues 488–510 (GNNN…NNKS), 529–543 (TNNT…SKSP), 552–565 (FDNN…NLDK), 639–654 (LMTM…LSTT), and 662–678 (NNEG…TANN).

It localises to the nucleus. Transcriptional regulator of nitrogen utilization required for nitrogen catabolite repression and utilization of isoleucine, tyrosine and tryptophan as nitrogen sources. Controls expression of the MEP2 ammonium permease, the DUR1,2 urea amidolyase, and the transcription factor STP1, which in turn mediates SAP2 expression, a long-known virulence attribute of C.albicans. Influences the filamentation process depending upon the nitrogen sources available. Required for virulence in a mouse systemic infection model. The protein is Transcriptional regulatory protein GAT1 (GAT1) of Candida albicans (strain SC5314 / ATCC MYA-2876) (Yeast).